The primary structure comprises 337 residues: Phenylalanine--tRNA ligase alpha subunit (337 aa).

Glu-252 contacts Mg(2+).

The protein belongs to the class-II aminoacyl-tRNA synthetase family. Phe-tRNA synthetase alpha subunit type 1 subfamily. As to quaternary structure, tetramer of two alpha and two beta subunits. Mg(2+) is required as a cofactor.

Its subcellular location is the cytoplasm. The enzyme catalyses tRNA(Phe) + L-phenylalanine + ATP = L-phenylalanyl-tRNA(Phe) + AMP + diphosphate + H(+). In Cellvibrio japonicus (strain Ueda107) (Pseudomonas fluorescens subsp. cellulosa), this protein is Phenylalanine--tRNA ligase alpha subunit.